Consider the following 521-residue polypeptide: 2-isopropylmalate synthase (521 aa).

Residues 12-274 (VIIFDTTLRD…WNKIDTTMLT (263 aa)) form the Pyruvate carboxyltransferase domain. Mn(2+) contacts are provided by aspartate 21, histidine 209, histidine 211, and asparagine 245. The interval 398–521 (KLVSLTVIAG…DMAAPAAAAS (124 aa)) is regulatory domain.

The protein belongs to the alpha-IPM synthase/homocitrate synthase family. LeuA type 1 subfamily. As to quaternary structure, homodimer. Mn(2+) is required as a cofactor.

It localises to the cytoplasm. The catalysed reaction is 3-methyl-2-oxobutanoate + acetyl-CoA + H2O = (2S)-2-isopropylmalate + CoA + H(+). The protein operates within amino-acid biosynthesis; L-leucine biosynthesis; L-leucine from 3-methyl-2-oxobutanoate: step 1/4. Functionally, catalyzes the condensation of the acetyl group of acetyl-CoA with 3-methyl-2-oxobutanoate (2-ketoisovalerate) to form 3-carboxy-3-hydroxy-4-methylpentanoate (2-isopropylmalate). This chain is 2-isopropylmalate synthase, found in Rhodopseudomonas palustris (strain BisA53).